A 271-amino-acid chain; its full sequence is 5'-AMP-activated protein kinase subunit beta-2 (271 aa).

The tract at residues 1–46 is disordered; sequence MGNTTSERVSGERHGAKAARAEGGGHGPGKEHKIMVGSTDDPSVFS. A Phosphoserine; by ULK1 modification is found at serine 38. Phosphothreonine; by ULK1 is present on threonine 39. The residue at position 68 (serine 68) is a Phosphoserine; by ULK1. 2 positions are modified to phosphoserine: serine 94 and serine 107. Phosphothreonine is present on threonine 147. Residues serine 157, serine 169, serine 173, and serine 183 each carry the phosphoserine modification.

Belongs to the 5'-AMP-activated protein kinase beta subunit family. As to quaternary structure, AMPK is a heterotrimer of an alpha catalytic subunit (PRKAA1 or PRKAA2), a beta (PRKAB1 or PRKAB2) and a gamma non-catalytic subunits (PRKAG1, PRKAG2 or PRKAG3). Phosphorylated when associated with the catalytic subunit (PRKAA1 or PRKAA2). Phosphorylated by ULK1 and ULK2; leading to negatively regulate AMPK activity and suggesting the existence of a regulatory feedback loop between ULK1, ULK2 and AMPK.

Functionally, non-catalytic subunit of AMP-activated protein kinase (AMPK), an energy sensor protein kinase that plays a key role in regulating cellular energy metabolism. In response to reduction of intracellular ATP levels, AMPK activates energy-producing pathways and inhibits energy-consuming processes: inhibits protein, carbohydrate and lipid biosynthesis, as well as cell growth and proliferation. AMPK acts via direct phosphorylation of metabolic enzymes, and by longer-term effects via phosphorylation of transcription regulators. Also acts as a regulator of cellular polarity by remodeling the actin cytoskeleton; probably by indirectly activating myosin. Beta non-catalytic subunit acts as a scaffold on which the AMPK complex assembles, via its C-terminus that bridges alpha (PRKAA1 or PRKAA2) and gamma subunits (PRKAG1, PRKAG2 or PRKAG3). In Mus musculus (Mouse), this protein is 5'-AMP-activated protein kinase subunit beta-2 (Prkab2).